Reading from the N-terminus, the 492-residue chain is Cytochrome P450 monooxygenase rdc4 (492 aa).

Cysteine 435 serves as a coordination point for heme.

The protein belongs to the cytochrome P450 family. Heme is required as a cofactor.

It functions in the pathway secondary metabolite biosynthesis. Functionally, cytochrome P450 monooxygenase; part of the gene cluster that mediates the biosynthesis of radicicol, a resorcylic acid lactone (RAL) that irreversibly inhibits the HSP90 molecular chaperone, an important target for cancer chemotherapy. The radicicol cluster encodes only two apparent post-PKS enzymes, a cytochrome P450 monooxygenase (rdc4) and a non-heme halogenase (rdc2) that could introduce the epoxide and the chlorine, respectively. If this cluster includes all the genes required for radicicol biosynthesis, the remaining structural features of radicicol are presumably generated by the PKSs rdc1 and rdc5. The C-2' ketone could arise if the R-PKS rdc5 and NR-PKS rdc1 each carry out four iterations, in contrast to the five iteration-three iteration split for the hypothemycin PKSs. The origin of the cis 5',6' double bond is not known. The radicicol R-PKS rdc5 ER domain may catalyze either double bond isomerization or reduction in the third iteration. The chain is Cytochrome P450 monooxygenase rdc4 from Metacordyceps chlamydosporia (Nematophagous fungus).